A 400-amino-acid chain; its full sequence is Coiled-coil domain-containing glutamate-rich protein 1 (400 aa).

Over residues 1–11 the composition is skewed to basic and acidic residues; that stretch reads MTQTVNEREDP. 3 disordered regions span residues 1–68, 134–164, and 203–353; these read MTQT…IPGP, RPPGRKKRWGRRGRGLRRHPRRSFPRNPPID, and QEKL…DKFL. The segment covering 31–45 has biased composition (basic residues); that stretch reads YHRRQRGAPMSKRRY. Basic and acidic residues predominate over residues 46-57; that stretch reads RDGPKTEYEAPR. A compositionally biased stretch (basic residues) spans 137 to 157; that stretch reads GRKKRWGRRGRGLRRHPRRSF. Residues 209-220 are compositionally biased toward low complexity; that stretch reads QQAALRAHQAQA. The segment covering 255-271 has biased composition (polar residues); that stretch reads PSLTFSPAPGQQNQSPT. Acidic residues predominate over residues 275 to 347; that stretch reads VEEEEKNVDD…EAGLEEGEQR (73 aa). Positions 299–335 form a coiled coil; the sequence is EEEEVDGESEDEDVDEEEVEEAGNGEEREEDQEEEDV.

It localises to the nucleus. Regulator of histone epigenetic modifications and chromatin compaction into the sperm head, required for histone-to-protamine (HTP) transition. HTP is a key event in which somatic histones are first replaced by testis-specific histone variants, then transition proteins (TNPs) are incorporated into the spermatid nucleus, and finally protamines (PRMs) replace the TNPs to promote chromatin condensation. This chain is Coiled-coil domain-containing glutamate-rich protein 1 (Ccer1), found in Rattus norvegicus (Rat).